The following is a 77-amino-acid chain: U14-theraphotoxin-Cg1a 3 (77 aa).

The signal sequence occupies residues 1–21 (MKTSVLLVILGIAAITVQCTA). Residues 22 to 49 (SESVEQDSLRTFVDTVLGWNAEMASEAR) constitute a propeptide that is removed on maturation. Intrachain disulfides connect Cys-50–Cys-64, Cys-57–Cys-69, and Cys-63–Cys-75. Lys-77 is modified (lysine amide).

Belongs to the neurotoxin 10 (Hwtx-1) family. 65 (Jztx-21) subfamily. In terms of tissue distribution, expressed by the venom gland.

Its subcellular location is the secreted. Probable ion channel inhibitor. This Chilobrachys guangxiensis (Chinese earth tiger tarantula) protein is U14-theraphotoxin-Cg1a 3.